We begin with the raw amino-acid sequence, 197 residues long: Probable chorismate pyruvate-lyase 2 (197 aa).

A compositionally biased stretch (basic and acidic residues) spans 1-14 (MRFDAADAHWRETP). Residues 1 to 23 (MRFDAADAHWRETPRPGASSAQK) are disordered. Positions 73, 111, and 173 each coordinate substrate.

This sequence belongs to the UbiC family.

It is found in the cytoplasm. It carries out the reaction chorismate = 4-hydroxybenzoate + pyruvate. The protein operates within cofactor biosynthesis; ubiquinone biosynthesis. Its function is as follows. Removes the pyruvyl group from chorismate, with concomitant aromatization of the ring, to provide 4-hydroxybenzoate (4HB) for the ubiquinone pathway. The protein is Probable chorismate pyruvate-lyase 2 of Burkholderia pseudomallei (strain 1710b).